The sequence spans 97 residues: Vitelline membrane protein 15a-2 (97 aa).

Positions 1–19 are cleaved as a signal peptide; it reads MNKIIAALVLFTAVIGALA. The required for binding to the gut receptor stretch occupies residues 20–23; sequence DYPA. The tract at residues 26-46 is disordered; that stretch reads PPPPKPYHAPPPPPYHAPPHH. The VM domain maps to 61–97; sequence KAPAAKCGANLLVGCAPSVAHVPCVPVHPHPPPPAHY.

It belongs to the vitelline membrane protein family. In terms of tissue distribution, expressed in the anterior region of the follicle cells.

The protein localises to the secreted. In terms of biological role, has an oostatic activity. Inhibits trypsin biosynthesis in the midgut epithelial cells which indirectly reduces the vitellogenin concentration in the hemolymph resulting in inhibition of oocyte development. This chain is Vitelline membrane protein 15a-2 (15a-2), found in Aedes aegypti (Yellowfever mosquito).